A 678-amino-acid chain; its full sequence is Geranylgeranyl transferase type-2 subunit alpha 1 (678 aa).

PFTA repeat units follow at residues 40–74 (YTNEAIELSTKLLEINPEAYTAWNYRKLAVEDRLA), 86–120 (ILDEELRVVESALRQNFKSYGAWHHRKWVLSKGHS), 121–155 (SVGNELRLLEKFQKLDSRNFHAWNYRRFVVELTNR), 156–190 (SEQDELQYTDDMINNNFSNYSAWHNRSVLLSSLLA), and 201–235 (KIPEEYDFVHSAIFTEPDDQSGWFYHLWLLDQTLN). 5 LRR repeats span residues 510 to 532 (MNNLVCLRLNNLSLSRIASVEKL), 533 to 554 (LFVQMLDLSHNELHSTEGLEAM), 555 to 578 (QLLSCLNLSHNRIRSFSALDSLRH), 580 to 604 (KQLKVLDVSHNHIGKHSVDTTRYLC), and 638 to 663 (DLNLKQLDIAGNEIAGEEFSSFVLQV).

It belongs to the protein prenyltransferase subunit alpha family. As to quaternary structure, heterotrimer composed of the alpha subunit RGTA, the beta subunit RGTB and REP; within this trimer, RGTA and RGTB form the catalytic component, while REP mediates peptide substrate binding.

It carries out the reaction geranylgeranyl diphosphate + L-cysteinyl-[protein] = S-geranylgeranyl-L-cysteinyl-[protein] + diphosphate. With respect to regulation, the enzymatic reaction requires the aid of the Rab escort protein REP. Catalyzes the transfer of a geranylgeranyl moiety from geranylgeranyl diphosphate to both cysteines of Rab proteins with the C-terminal sequence -CCXX, CXXX, -XCCX and -XCXC, such as RABA1A, RABA2A, RABF2A and RABG2. In vitro, can prenylate PGGTI targets with the C-terminal Cys-aliphatic-aliphatic-X (CaaX) with leucine in the terminal position. Substrates with the C-terminal sequence -CSIL such as ARAC11/ROP1 or GG2/AGG2 are prenylated independently of REP and when the alpha subunit is associated with a beta subunit (RGTB1 or RGTB2). This chain is Geranylgeranyl transferase type-2 subunit alpha 1, found in Arabidopsis thaliana (Mouse-ear cress).